The sequence spans 487 residues: Probable cytochrome P450 313a5 (487 aa).

Tyr223 carries the post-translational modification Phosphotyrosine. Position 433 (Cys433) interacts with heme.

It belongs to the cytochrome P450 family. It depends on heme as a cofactor.

It is found in the endoplasmic reticulum membrane. Its subcellular location is the microsome membrane. May be involved in the metabolism of insect hormones and in the breakdown of synthetic insecticides. The sequence is that of Probable cytochrome P450 313a5 (Cyp313a5) from Drosophila melanogaster (Fruit fly).